The following is a 1318-amino-acid chain: DNA-directed RNA polymerase subunit beta' (1318 aa).

Positions 221, 295, 302, and 305 each coordinate Zn(2+).

It belongs to the RNA polymerase beta' chain family. RpoC2 subfamily. As to quaternary structure, in cyanobacteria the RNAP catalytic core is composed of 2 alpha, 1 beta, 1 beta', 1 gamma and 1 omega subunit. When a sigma factor is associated with the core the holoenzyme is formed, which can initiate transcription. The cofactor is Zn(2+).

It carries out the reaction RNA(n) + a ribonucleoside 5'-triphosphate = RNA(n+1) + diphosphate. In terms of biological role, DNA-dependent RNA polymerase catalyzes the transcription of DNA into RNA using the four ribonucleoside triphosphates as substrates. This is DNA-directed RNA polymerase subunit beta' from Synechococcus sp. (strain ATCC 27144 / PCC 6301 / SAUG 1402/1) (Anacystis nidulans).